The primary structure comprises 41 residues: Iota-conotoxin-like r11d (41 aa).

Cystine bridges form between C2–C16, C9–C19, C15–C24, and C18–C35. P8 bears the 4-hydroxyproline mark. A 4-hydroxyproline modification is found at P26.

Post-translationally, position 41 corresponds to a L-threonine, and not a D-threonine as firstly supposed. As to expression, expressed by the venom duct.

The protein resides in the secreted. In terms of biological role, iota-conotoxins bind to voltage-gated sodium channels (Nav) and act as agonists by shifting the voltage-dependence of activation to more hyperpolarized levels. Both natural (L-Thr form) and synthetic (D-Thr form) peptides cause paralysis and death following intracranial injection and grooming and hypersensitivity upon intraperitoneal injection into mice. The L-Thr form of the peptide is 7-fold more potent than the D-Thr form. Both natural peptide (L-Thr form) and synthetic peptide (D-Thr form) are active on nerve, and on muscle. The chain is Iota-conotoxin-like r11d from Conus radiatus (Rayed cone).